The chain runs to 210 residues: Somatotropin (210 aa).

Positions 1–22 are cleaved as a signal peptide; the sequence is MGQVFLLMPVLLVSCFLSQGAA. Position 38 (His38) interacts with Zn(2+). A disulfide bond links Cys71 and Cys183. A Zn(2+)-binding site is contributed by Glu192. Cysteines 200 and 208 form a disulfide.

The protein belongs to the somatotropin/prolactin family.

It is found in the secreted. Functionally, growth hormone plays an important role in growth control and is involved in the regulation of several anabolic processes. Implicated as an osmoregulatory substance important for seawater adaptation. The chain is Somatotropin (gh) from Oncorhynchus keta (Chum salmon).